The sequence spans 2156 residues: Probable capsid protein 3 (2156 aa).

The segment at 1319–1345 is disordered; that stretch reads NKSNKSNKSNESDKSSESDKSSESSNH. Positions 1326 to 1345 are enriched in basic and acidic residues; the sequence is KSNESDKSSESDKSSESSNH.

This sequence belongs to the NCLDV major capsid protein family.

The protein localises to the virion. The protein is Probable capsid protein 3 of Acanthamoeba polyphaga mimivirus (APMV).